A 297-amino-acid polypeptide reads, in one-letter code: L-ribulose 3-epimerase (297 aa).

The active-site Proton donor/acceptor is the Glu-147. A Mn(2+)-binding site is contributed by Glu-147. Residues Glu-153 and 180–183 (DTFH) contribute to the substrate site. Asp-180 and His-206 together coordinate Mn(2+). Position 212 (Arg-212) interacts with substrate. Glu-241 (proton donor/acceptor) is an active-site residue. Glu-241 is a Mn(2+) binding site.

It belongs to the hyi family. In terms of assembly, homotetramer. Mn(2+) is required as a cofactor.

It carries out the reaction L-ribulose = L-xylulose. The catalysed reaction is keto-D-tagatose = keto-D-sorbose. The enzyme catalyses D-allulose = keto-D-fructose. With respect to regulation, strongly inhibited by Co(2+) and Ni(2+), and slightly inhibited by EDTA. Its function is as follows. Catalyzes the epimerization of various ketoses at the C(3) position. It is able to interconvert L-ribulose with high efficiency. The enzyme can also accept other ketopentoses such as D-psicose and D-tagatose with lower efficiency. In Mesorhizobium japonicum (strain LMG 29417 / CECT 9101 / MAFF 303099) (Mesorhizobium loti (strain MAFF 303099)), this protein is L-ribulose 3-epimerase.